The chain runs to 450 residues: ATP-dependent protease ATPase subunit HslU (450 aa).

Residues Val29, Gly71–Glu76, Asp261, Glu328, and Arg400 contribute to the ATP site.

The protein belongs to the ClpX chaperone family. HslU subfamily. A double ring-shaped homohexamer of HslV is capped on each side by a ring-shaped HslU homohexamer. The assembly of the HslU/HslV complex is dependent on binding of ATP.

Its subcellular location is the cytoplasm. Functionally, ATPase subunit of a proteasome-like degradation complex; this subunit has chaperone activity. The binding of ATP and its subsequent hydrolysis by HslU are essential for unfolding of protein substrates subsequently hydrolyzed by HslV. HslU recognizes the N-terminal part of its protein substrates and unfolds these before they are guided to HslV for hydrolysis. In Rickettsia peacockii (strain Rustic), this protein is ATP-dependent protease ATPase subunit HslU.